A 125-amino-acid polypeptide reads, in one-letter code: Fluoride-specific ion channel FluC (125 aa).

A run of 4 helical transmembrane segments spans residues 4-24 (VIYVALGGAVGSVLRYWVGIV), 32-52 (FLPWGTFSVNLIGSFCIGLFA), 68-88 (LLITGLLGGFTTFSAFMLDTV), and 100-120 (AFYVAASIGFGVGAVFAGLAV). 2 residues coordinate Na(+): Gly-75 and Thr-78.

The protein belongs to the fluoride channel Fluc/FEX (TC 1.A.43) family.

The protein localises to the cell inner membrane. It carries out the reaction fluoride(in) = fluoride(out). With respect to regulation, na(+) is not transported, but it plays an essential structural role and its presence is essential for fluoride channel function. Its function is as follows. Fluoride-specific ion channel. Important for reducing fluoride concentration in the cell, thus reducing its toxicity. This chain is Fluoride-specific ion channel FluC, found in Allorhizobium ampelinum (strain ATCC BAA-846 / DSM 112012 / S4) (Agrobacterium vitis (strain S4)).